Consider the following 1226-residue polypeptide: Chitin synthase IV (1226 aa).

Positions 1-205 (MSLPERPGGS…SRKNPATAEQ (205 aa)) are disordered. A compositionally biased stretch (polar residues) spans 49 to 65 (SVSSYAETISNPHANTE). The segment covering 66 to 75 (TLPLSPTHPT) has biased composition (low complexity). Residues 94–107 (IRPERNRIDKDHRN) show a composition bias toward basic and acidic residues. The segment covering 134-151 (DVSTEPSGGSQTHGSFAD) has biased composition (polar residues). Residues 163–172 (MSGDDQEKGN) show a composition bias toward basic and acidic residues. Residues 173-198 (TRVKSRPRRSKSGKITKETRHRKSRK) are compositionally biased toward basic residues. Residues 246 to 266 (MGLISIILVIMAIVGFLTFGF) traverse the membrane as a helical segment. 3 N-linked (GlcNAc...) asparagine glycosylation sites follow: Asn-381, Asn-421, and Asn-443. A helical transmembrane segment spans residues 516–536 (ILILSVVGTRFVLALIFQWFI). The disordered stretch occupies residues 572 to 671 (LPGDVGSSAM…PGPAGFIHDS (100 aa)). Polar residues-rich tracts occupy residues 580–601 (AMGS…TSRF) and 618–643 (TTMS…NDSR). Residue Asn-640 is glycosylated (N-linked (GlcNAc...) asparagine). Residues 649–666 (PDPYSSAASPSDGPGPAG) are compositionally biased toward low complexity. Asn-787 and Asn-1035 each carry an N-linked (GlcNAc...) asparagine glycan. Transmembrane regions (helical) follow at residues 1060 to 1080 (FVVF…AFTF), 1094 to 1114 (IIPL…ILVT), and 1118 to 1138 (WSYV…NFVL).

This sequence belongs to the chitin synthase family. Class IV subfamily. Highly expressed in conidia.

It is found in the cell membrane. The catalysed reaction is [(1-&gt;4)-N-acetyl-beta-D-glucosaminyl](n) + UDP-N-acetyl-alpha-D-glucosamine = [(1-&gt;4)-N-acetyl-beta-D-glucosaminyl](n+1) + UDP + H(+). Its function is as follows. Polymerizes chitin, a structural polymer of the cell wall and septum, by transferring the sugar moiety of UDP-GlcNAc to the non-reducing end of the growing chitin polymer. Contributes to the production of conidia and the ability of fungal conidia to germinate. Involved in fungal stress tolerances. The protein is Chitin synthase IV of Metarhizium acridum (strain CQMa 102).